We begin with the raw amino-acid sequence, 556 residues long: Arginine--tRNA ligase (556 aa).

The 'HIGH' region signature appears at 130 to 140 (ANPTGPIHLGG).

It belongs to the class-I aminoacyl-tRNA synthetase family. In terms of assembly, monomer.

Its subcellular location is the cytoplasm. The enzyme catalyses tRNA(Arg) + L-arginine + ATP = L-arginyl-tRNA(Arg) + AMP + diphosphate. In Corynebacterium jeikeium (strain K411), this protein is Arginine--tRNA ligase.